Reading from the N-terminus, the 303-residue chain is N-acetyl-D-glucosamine kinase (303 aa).

ATP contacts are provided by residues 4 to 11 (GFDIGGTK) and 133 to 140 (GVGGGLIF). 4 residues coordinate Zn(2+): His-157, Cys-177, Cys-179, and Cys-184.

It belongs to the ROK (NagC/XylR) family. NagK subfamily.

The catalysed reaction is N-acetyl-D-glucosamine + ATP = N-acetyl-D-glucosamine 6-phosphate + ADP + H(+). Its pathway is cell wall biogenesis; peptidoglycan recycling. Functionally, catalyzes the phosphorylation of N-acetyl-D-glucosamine (GlcNAc) derived from cell-wall degradation, yielding GlcNAc-6-P. The chain is N-acetyl-D-glucosamine kinase from Escherichia coli (strain K12 / DH10B).